The sequence spans 399 residues: Sphingosine-1-phosphate phosphatase 2 (399 aa).

4 consecutive transmembrane segments (helical) span residues 88 to 108 (YLFQ…FLPF), 121 to 141 (LIII…VLKW), 160 to 180 (YGMP…LLIS), and 185 to 205 (YQYP…LVCL). Residues 136–144 (KDVLKWPRP) are phosphatase sequence motif I. Residues 163–166 (PSTH) form a phosphatase sequence motif II region. His-166 (proton donor) is an active-site residue. The tract at residues 206-217 (SRLYTGMHTVLD) is phosphatase sequence motif III. The active-site Nucleophile is the His-213. 5 consecutive transmembrane segments (helical) span residues 219-239 (LGGV…WTFI), 247-267 (PLFP…YPVS), 280-300 (ILAA…FQLV), 318-338 (TYML…ILLV), and 371-391 (VPYK…FVPM).

It belongs to the type 2 lipid phosphate phosphatase family. Expressed strongly in kidney and heart, followed by brain, colon, small intestine and lung. Not detected in skeletal muscle, thymus, spleen, liver, placenta, and peripheral blood leukocytes.

It is found in the endoplasmic reticulum membrane. It catalyses the reaction sphinganine 1-phosphate + H2O = sphinganine + phosphate. It carries out the reaction sphing-4-enine 1-phosphate + H2O = sphing-4-enine + phosphate. The enzyme catalyses (4R)-hydroxysphinganine 1-phosphate + H2O = (4R)-hydroxysphinganine + phosphate. In terms of biological role, has specific phosphohydrolase activity towards sphingoid base 1-phosphates. Has high phosphohydrolase activity against dihydrosphingosine-1-phosphate and sphingosine-1-phosphate (S1P) in vitro. Sphingosine-1-phosphate phosphatase activity is needed for efficient recycling of sphingosine into the sphingolipid synthesis pathway. May play a role in attenuating intracellular sphingosine 1-phosphate (S1P) signaling. May play a role in pro-inflammatory signaling. Plays a role in the regulation of pancreatic islet beta-cell endoplasmic reticulum stress and proliferation. In Homo sapiens (Human), this protein is Sphingosine-1-phosphate phosphatase 2.